Reading from the N-terminus, the 367-residue chain is Nociceptin receptor (367 aa).

Residues 1–45 (MESLFPAPYWEVLYGSHFQGNLSLLNETVPHHLLLNASHSAFLPL) lie on the Extracellular side of the membrane. Asparagine 21, asparagine 26, and asparagine 36 each carry an N-linked (GlcNAc...) asparagine glycan. The chain crosses the membrane as a helical span at residues 46 to 71 (GLKVTIVGLYLAVCIGGLLGNCLVMY). Residues 72 to 84 (VILRHTKMKTATN) are Cytoplasmic-facing. The chain crosses the membrane as a helical span at residues 85-106 (IYIFNLALADTLVLLTLPFQGT). At 107–121 (DILLGFWPFGNALCK) the chain is on the extracellular side. The cysteines at positions 120 and 197 are disulfide-linked. A helical transmembrane segment spans residues 122–143 (TVIAIDYYNMFTSTFTLTAMSV). Residues 144-162 (DRYVAICHPIRALDVRTSS) are Cytoplasmic-facing. A helical transmembrane segment spans residues 163–185 (KAQAVNVAIWALASVVGVPVAIM). Residues 186–208 (GSAQVEDEEIECLVEIPAPQDYW) lie on the Extracellular side of the membrane. The chain crosses the membrane as a helical span at residues 209-233 (GPVFAICIFLFSFIIPVLIISVCYS). The Cytoplasmic segment spans residues 234-261 (LMIRRLRGVRLLSGSREKDRNLRRITRL). A helical transmembrane segment spans residues 262 to 282 (VLVVVAVFVGCWTPVQVFVLV). At 283–297 (QGLGVQPGSETAVAI) the chain is on the extracellular side. A helical transmembrane segment spans residues 298–319 (LRFCTALGYVNSCLNPILYAFL). Topologically, residues 320–367 (DENFKACFRKFCCASSLHREMQVSDRVRSIAKDVGLGCKTSETVPRPA) are cytoplasmic. Residue cysteine 331 is the site of S-palmitoyl cysteine attachment.

This sequence belongs to the G-protein coupled receptor 1 family. Phosphorylation at Ser-360 requires GRK3. Highly expressed in several brain areas, the intestine, liver and spleen. Detected in sympathetic stellate ganglion neurons.

The protein resides in the cell membrane. The protein localises to the cytoplasmic vesicle. G-protein coupled opioid receptor that functions as a receptor for the endogenous neuropeptide nociceptin. Ligand binding causes a conformation change that triggers signaling via guanine nucleotide-binding proteins (G proteins) and modulates the activity of down-stream effectors. Signaling via G proteins mediates inhibition of adenylate cyclase activity and calcium channel activity. Arrestins modulate signaling via G proteins and mediate the activation of alternative signaling pathways that lead to the activation of MAP kinases. Plays a role in modulating nociception and the perception of pain. Plays a role in the regulation of locomotor activity by the neuropeptide nociceptin. The polypeptide is Nociceptin receptor (Oprl1) (Rattus norvegicus (Rat)).